The sequence spans 436 residues: T-box transcription factor TBX6 (436 aa).

Positions 100–273 form a DNA-binding region, T-box; the sequence is LWKEFSSVGT…ANPFAKGFRE (174 aa). The span at 271 to 284 shows a compositional bias: basic and acidic residues; sequence FRENGRNCKRERDA. Disordered stretches follow at residues 271-339 and 360-379; these read FREN…APAP and PSHLPTRSPSFPEAPDSGRS. Residues 325–339 are compositionally biased toward low complexity; it reads EQAPAPGEATAAPAP.

In terms of assembly, forms a dimeric complex with DNA (in vitro). Expressed in fetal tail bud, posterior spinal tissue, intervertebral disk and testis. Also expressed in adult testis, kidney, lung, muscle and thymus.

Its subcellular location is the nucleus. T-box transcription factor that plays an essential role in the determination of the fate of axial stem cells: neural vs mesodermal. Acts in part by down-regulating, a specific enhancer (N1) of SOX2, to inhibit neural development. Seems to play also an essential role in left/right axis determination and acts through effects on Notch signaling around the node as well as through an effect on the morphology and motility of the nodal cilia. This is T-box transcription factor TBX6 (TBX6) from Homo sapiens (Human).